A 374-amino-acid polypeptide reads, in one-letter code: Chaperone protein DnaJ (374 aa).

The J domain occupies 5-70 (DYYEVLGVER…SKRAAFDQYG (66 aa)). The CR-type zinc-finger motif lies at 133–211 (GTTVSIRVPT…CHGEGRVEEY (79 aa)). Cys146, Cys149, Cys163, Cys166, Cys185, Cys188, Cys199, and Cys202 together coordinate Zn(2+). CXXCXGXG motif repeat units follow at residues 146–153 (CQPCDGSG), 163–170 (CPTCGGIG), 185–192 (CPRCHGQG), and 199–206 (CTSCHGEG).

It belongs to the DnaJ family. As to quaternary structure, homodimer. It depends on Zn(2+) as a cofactor.

The protein localises to the cytoplasm. In terms of biological role, participates actively in the response to hyperosmotic and heat shock by preventing the aggregation of stress-denatured proteins and by disaggregating proteins, also in an autonomous, DnaK-independent fashion. Unfolded proteins bind initially to DnaJ; upon interaction with the DnaJ-bound protein, DnaK hydrolyzes its bound ATP, resulting in the formation of a stable complex. GrpE releases ADP from DnaK; ATP binding to DnaK triggers the release of the substrate protein, thus completing the reaction cycle. Several rounds of ATP-dependent interactions between DnaJ, DnaK and GrpE are required for fully efficient folding. Also involved, together with DnaK and GrpE, in the DNA replication of plasmids through activation of initiation proteins. In Pseudomonas putida (strain GB-1), this protein is Chaperone protein DnaJ.